Reading from the N-terminus, the 567-residue chain is Phosphoglucomutase-like protein 5 (567 aa).

Residues 1-26 (MEGSPIPVLTVPTAPYEDQRPTGGGG) are disordered. The residue at position 120 (Thr-120) is a Phosphothreonine. Ser-122 bears the Phosphoserine mark.

The protein belongs to the phosphohexose mutase family. As to quaternary structure, interacts with DMD/dystrophin; the interaction is direct. Interacts with UTRN/utrophin.

It localises to the cell junction. The protein resides in the adherens junction. The protein localises to the cytoplasm. It is found in the cytoskeleton. Its subcellular location is the cell membrane. It localises to the sarcolemma. Functionally, component of adherens-type cell-cell and cell-matrix junctions. Has no phosphoglucomutase activity in vitro. The protein is Phosphoglucomutase-like protein 5 of Rattus norvegicus (Rat).